Reading from the N-terminus, the 1165-residue chain is Leptin receptor (1165 aa).

Positions 1–21 (MTCPKFSVALLHWEFIYVITA) are cleaved as a signal peptide. The Extracellular portion of the chain corresponds to 22–838 (FDLAYPITPW…TQDGEKHRND (817 aa)). Disulfide bonds link C37–C90, C89–C99, C131–C142, C186–C196, and C188–C193. 5 N-linked (GlcNAc...) asparagine glycosylation sites follow: N41, N55, N72, N80, and N98. N-linked (GlcNAc...) asparagine glycosylation is present at N187. N-linked (GlcNAc...) asparagine glycosylation is found at N206, N276, N347, and N397. Positions 239-332 (PPLGLHMEIT…STPFTFTTQD (94 aa)) constitute a Fibronectin type-III 1 domain. 2 disulfides stabilise this stretch: C352–C412 and C413–C418. N-linked (GlcNAc...) asparagine glycosylation occurs at N433. 3 disulfide bridges follow: C436–C447, C473–C528, and C488–C498. Residues 467 to 484 (HRSSLYCSDVPSVHPISE) are leptin-binding. Fibronectin type-III domains lie at 539 to 634 (PPSS…TVVT), 642 to 736 (GPEF…WPMS), and 740 to 834 (IVQS…DGEK). The short motif at 622–626 (WSNWS) is the WSXWS motif element. 6 N-linked (GlcNAc...) asparagine glycosylation sites follow: N624, N659, N670, N697, N728, and N750. The chain crosses the membrane as a helical span at residues 839 to 861 (AGLYVIVPIIISSSILLLGTLLM). The Cytoplasmic portion of the chain corresponds to 862 to 1165 (SHQRMKKLFW…MENKMYDLTV (304 aa)). Residues 870–878 (FWEDVPNPK) carry the Box 1 motif motif. S881 is subject to Phosphoserine. Residues 892–897 (ETFEHL) are required for JAK2 activation. Residues 897–905 (LFIKHTESV) form a required for STAT3 phosphorylation region. Y986 bears the Phosphotyrosine; by JAK2 mark. At Y1079 the chain carries Phosphotyrosine. Y1141 carries the post-translational modification Phosphotyrosine; by JAK2.

Belongs to the type I cytokine receptor family. Type 2 subfamily. As to quaternary structure, present as a mixture of monomers and dimers. The phosphorylated receptor binds a number of SH2 domain-containing proteins such as JAK2, STAT3, PTPN11, and SOCS3. Interaction with SOCS3 inhibits JAK/STAT signaling and MAPK cascade. Post-translationally, on ligand binding, phosphorylated on two conserved C-terminal tyrosine residues by JAK2. Tyr-986 is required for complete binding and activation of PTPN11, ERK/FOS activation,for interaction with SOCS3 and SOCS3 mediated inhibition of leptin signaling. Phosphorylation on Tyr-1141 is required for STAT3 binding/activation. Phosphorylation of Tyr-1079 has a more accessory role. Kidney, liver, spleen, lung, brain, testis, uterus, ovary, corpus luteum, theca and granulosa cells.

The protein localises to the cell membrane. The protein resides in the basolateral cell membrane. In terms of biological role, receptor for hormone LEP/leptin. On ligand binding, mediates LEP central and peripheral effects through the activation of different signaling pathways such as JAK2/STAT3 and MAPK cascade/FOS. In the hypothalamus, LEP acts as an appetite-regulating factor that induces a decrease in food intake and an increase in energy consumption by inducing anorexinogenic factors and suppressing orexigenic neuropeptides, also regulates bone mass and secretion of hypothalamo-pituitary-adrenal hormones. In the periphery, increases basal metabolism, influences reproductive function, regulates pancreatic beta-cell function and insulin secretion, is pro-angiogenic and affects innate and adaptive immunity. Control of energy homeostasis and melanocortin production (stimulation of POMC and full repression of AgRP transcription) is mediated by STAT3 signaling, whereas distinct signals regulate NPY and the control of fertility, growth and glucose homeostasis. Involved in the regulation of counter-regulatory response to hypoglycemia by inhibiting neurons of the parabrachial nucleus. Has a specific effect on T lymphocyte responses, differentially regulating the proliferation of naive and memory T-cells. Leptin increases Th1 and suppresses Th2 cytokine production. The sequence is that of Leptin receptor (LEPR) from Sus scrofa (Pig).